We begin with the raw amino-acid sequence, 507 residues long: Cobyric acid synthase (507 aa).

Residues 251–448 (DIDIAVVHLP…LHGLFDSDAF (198 aa)) enclose the GATase cobBQ-type domain. The active-site Nucleophile is the C332. H440 is a catalytic residue.

Belongs to the CobB/CobQ family. CobQ subfamily.

It functions in the pathway cofactor biosynthesis; adenosylcobalamin biosynthesis. Catalyzes amidations at positions B, D, E, and G on adenosylcobyrinic A,C-diamide. NH(2) groups are provided by glutamine, and one molecule of ATP is hydrogenolyzed for each amidation. This is Cobyric acid synthase from Klebsiella pneumoniae (strain 342).